Reading from the N-terminus, the 393-residue chain is uncharacterized protein (393 aa).

67-74 (GPDGMGKS) lines the ATP pocket.

This is an uncharacterized protein from Mycobacterium tuberculosis (strain CDC 1551 / Oshkosh).